Here is a 338-residue protein sequence, read N- to C-terminus: Ketol-acid reductoisomerase (NADP(+)) (338 aa).

In terms of domain architecture, KARI N-terminal Rossmann spans 1–181 (MQVYYDKDAD…GGGRAGVIET (181 aa)). Residues 24–27 (YGSQ), arginine 47, serine 50, serine 52, and 82–85 (DEHQ) contribute to the NADP(+) site. Histidine 107 is an active-site residue. Glycine 133 serves as a coordination point for NADP(+). In terms of domain architecture, KARI C-terminal knotted spans 182-327 (SFREETETDL…ERLRGMMPWI (146 aa)). Aspartate 190, glutamate 194, glutamate 226, and glutamate 230 together coordinate Mg(2+). Serine 251 is a binding site for substrate.

This sequence belongs to the ketol-acid reductoisomerase family. It depends on Mg(2+) as a cofactor.

The enzyme catalyses (2R)-2,3-dihydroxy-3-methylbutanoate + NADP(+) = (2S)-2-acetolactate + NADPH + H(+). It catalyses the reaction (2R,3R)-2,3-dihydroxy-3-methylpentanoate + NADP(+) = (S)-2-ethyl-2-hydroxy-3-oxobutanoate + NADPH + H(+). The protein operates within amino-acid biosynthesis; L-isoleucine biosynthesis; L-isoleucine from 2-oxobutanoate: step 2/4. It functions in the pathway amino-acid biosynthesis; L-valine biosynthesis; L-valine from pyruvate: step 2/4. In terms of biological role, involved in the biosynthesis of branched-chain amino acids (BCAA). Catalyzes an alkyl-migration followed by a ketol-acid reduction of (S)-2-acetolactate (S2AL) to yield (R)-2,3-dihydroxy-isovalerate. In the isomerase reaction, S2AL is rearranged via a Mg-dependent methyl migration to produce 3-hydroxy-3-methyl-2-ketobutyrate (HMKB). In the reductase reaction, this 2-ketoacid undergoes a metal-dependent reduction by NADPH to yield (R)-2,3-dihydroxy-isovalerate. The sequence is that of Ketol-acid reductoisomerase (NADP(+)) from Alkalilimnicola ehrlichii (strain ATCC BAA-1101 / DSM 17681 / MLHE-1).